Consider the following 195-residue polypeptide: Probable GTP-binding protein EngB (195 aa).

Residues 24-195 (GLSEVGLSGR…QIWNVIEKYL (172 aa)) enclose the EngB-type G domain. GTP-binding positions include 32-39 (GRSNVGKS), 59-63 (GKTQT), 77-80 (DVPG), 144-147 (TKED), and 176-178 (YSS). The Mg(2+) site is built by Ser39 and Thr61.

Belongs to the TRAFAC class TrmE-Era-EngA-EngB-Septin-like GTPase superfamily. EngB GTPase family. Mg(2+) serves as cofactor.

Functionally, necessary for normal cell division and for the maintenance of normal septation. This chain is Probable GTP-binding protein EngB, found in Staphylococcus saprophyticus subsp. saprophyticus (strain ATCC 15305 / DSM 20229 / NCIMB 8711 / NCTC 7292 / S-41).